The sequence spans 803 residues: Leucine--tRNA ligase (803 aa).

The 'HIGH' region motif lies at 40–51; the sequence is PYPSGAGLHVGH. Positions 575-579 match the 'KMSKS' region motif; it reads KMSKS. Residue K578 participates in ATP binding.

This sequence belongs to the class-I aminoacyl-tRNA synthetase family.

It is found in the cytoplasm. It carries out the reaction tRNA(Leu) + L-leucine + ATP = L-leucyl-tRNA(Leu) + AMP + diphosphate. This Listeria monocytogenes serotype 4b (strain F2365) protein is Leucine--tRNA ligase.